Here is a 339-residue protein sequence, read N- to C-terminus: N-acetyl-gamma-glutamyl-phosphate reductase (339 aa).

C145 is a catalytic residue.

It belongs to the NAGSA dehydrogenase family. Type 1 subfamily.

Its subcellular location is the cytoplasm. It catalyses the reaction N-acetyl-L-glutamate 5-semialdehyde + phosphate + NADP(+) = N-acetyl-L-glutamyl 5-phosphate + NADPH + H(+). The protein operates within amino-acid biosynthesis; L-arginine biosynthesis; N(2)-acetyl-L-ornithine from L-glutamate: step 3/4. Its function is as follows. Catalyzes the NADPH-dependent reduction of N-acetyl-5-glutamyl phosphate to yield N-acetyl-L-glutamate 5-semialdehyde. In Thermotoga maritima (strain ATCC 43589 / DSM 3109 / JCM 10099 / NBRC 100826 / MSB8), this protein is N-acetyl-gamma-glutamyl-phosphate reductase.